The primary structure comprises 117 residues: Immunoglobulin kappa variable 1-12 (117 aa).

The signal sequence occupies residues 1–22; it reads MDMRVPAQLLGLLLLWFPGSRC. A framework-1 region spans residues 23–45; that stretch reads DIQMTQSPSSVSASVGDRVTITC. The Ig-like domain occupies 24–117; it reads IQMTQSPSSV…YYCQQANSFP (94 aa). The cysteines at positions 45 and 110 are disulfide-linked. A complementarity-determining-1 region spans residues 46-56; it reads RASQGISSWLA. Residues 57–71 are framework-2; sequence WYQQKPGKAPKLLIY. The tract at residues 72–78 is complementarity-determining-2; that stretch reads AASSLQS. Residues 79 to 110 are framework-3; it reads GVPSRFSGSGSGTDFTLTISSLQPEDFATYYC. The interval 111–117 is complementarity-determining-3; sequence QQANSFP.

In terms of assembly, immunoglobulins are composed of two identical heavy chains and two identical light chains; disulfide-linked.

Its subcellular location is the secreted. The protein resides in the cell membrane. Its function is as follows. V region of the variable domain of immunoglobulin light chains that participates in the antigen recognition. Immunoglobulins, also known as antibodies, are membrane-bound or secreted glycoproteins produced by B lymphocytes. In the recognition phase of humoral immunity, the membrane-bound immunoglobulins serve as receptors which, upon binding of a specific antigen, trigger the clonal expansion and differentiation of B lymphocytes into immunoglobulins-secreting plasma cells. Secreted immunoglobulins mediate the effector phase of humoral immunity, which results in the elimination of bound antigens. The antigen binding site is formed by the variable domain of one heavy chain, together with that of its associated light chain. Thus, each immunoglobulin has two antigen binding sites with remarkable affinity for a particular antigen. The variable domains are assembled by a process called V-(D)-J rearrangement and can then be subjected to somatic hypermutations which, after exposure to antigen and selection, allow affinity maturation for a particular antigen. The sequence is that of Immunoglobulin kappa variable 1-12 from Homo sapiens (Human).